The primary structure comprises 122 residues: S-adenosylmethionine decarboxylase proenzyme (122 aa).

S63 serves as the catalytic Schiff-base intermediate with substrate; via pyruvic acid. Pyruvic acid (Ser); by autocatalysis is present on S63. H68 acts as the Proton acceptor; for processing activity in catalysis. The Proton donor; for catalytic activity role is filled by C83.

The protein belongs to the prokaryotic AdoMetDC family. Type 1 subfamily. Heterotetramer of two alpha and two beta chains arranged as a dimer of alpha/beta heterodimers. Pyruvate serves as cofactor. Is synthesized initially as an inactive proenzyme. Formation of the active enzyme involves a self-maturation process in which the active site pyruvoyl group is generated from an internal serine residue via an autocatalytic post-translational modification. Two non-identical subunits are generated from the proenzyme in this reaction, and the pyruvate is formed at the N-terminus of the alpha chain, which is derived from the carboxyl end of the proenzyme. The post-translation cleavage follows an unusual pathway, termed non-hydrolytic serinolysis, in which the side chain hydroxyl group of the serine supplies its oxygen atom to form the C-terminus of the beta chain, while the remainder of the serine residue undergoes an oxidative deamination to produce ammonia and the pyruvoyl group blocking the N-terminus of the alpha chain.

It carries out the reaction S-adenosyl-L-methionine + H(+) = S-adenosyl 3-(methylsulfanyl)propylamine + CO2. It functions in the pathway amine and polyamine biosynthesis; S-adenosylmethioninamine biosynthesis; S-adenosylmethioninamine from S-adenosyl-L-methionine: step 1/1. Functionally, catalyzes the decarboxylation of S-adenosylmethionine to S-adenosylmethioninamine (dcAdoMet), the propylamine donor required for the synthesis of the polyamines spermine and spermidine from the diamine putrescine. In Methanococcus maripaludis (strain C5 / ATCC BAA-1333), this protein is S-adenosylmethionine decarboxylase proenzyme.